The primary structure comprises 392 residues: Tryptophan synthase beta chain (392 aa).

Lys86 carries the post-translational modification N6-(pyridoxal phosphate)lysine.

Belongs to the TrpB family. In terms of assembly, tetramer of two alpha and two beta chains. It depends on pyridoxal 5'-phosphate as a cofactor.

The catalysed reaction is (1S,2R)-1-C-(indol-3-yl)glycerol 3-phosphate + L-serine = D-glyceraldehyde 3-phosphate + L-tryptophan + H2O. Its pathway is amino-acid biosynthesis; L-tryptophan biosynthesis; L-tryptophan from chorismate: step 5/5. Its function is as follows. The beta subunit is responsible for the synthesis of L-tryptophan from indole and L-serine. The polypeptide is Tryptophan synthase beta chain (trpB) (Buchnera aphidicola subsp. Schlechtendalia chinensis).